A 99-amino-acid chain; its full sequence is Transcription and mRNA export factor SUS1 (99 aa).

The protein belongs to the ENY2 family. As to quaternary structure, component of the nuclear pore complex (NPC)-associated TREX-2 complex (transcription and export complex 2), composed of at least SUS1, SAC3, THP1, SEM1, and CDC31. TREX-2 contains 2 SUS1 chains. The TREX-2 complex interacts with the nucleoporin NUP1. Component of the 1.8 MDa SAGA transcription coactivator-HAT complex. SAGA is built of 5 distinct domains with specialized functions. Within the SAGA complex, SUS1, SGF11, SGF73 and UBP8 form an additional subcomplex of SAGA called the DUB module (deubiquitination module). Interacts directly with THP1, SAC3, SGF11, and with the RNA polymerase II.

Its subcellular location is the nucleus. It is found in the nucleoplasm. The protein localises to the cytoplasm. The protein resides in the P-body. Functionally, involved in mRNA export coupled transcription activation by association with both the TREX-2 and the SAGA complexes. At the promoters, SAGA is required for recruitment of the basal transcription machinery. It influences RNA polymerase II transcriptional activity through different activities such as TBP interaction and promoter selectivity, interaction with transcription activators, and chromatin modification through histone acetylation and deubiquitination. Within the SAGA complex, participates in a subcomplex required for deubiquitination of H2B and for the maintenance of steady-state H3 methylation levels. The TREX-2 complex functions in docking export-competent ribonucleoprotein particles (mRNPs) to the nuclear entrance of the nuclear pore complex (nuclear basket). TREX-2 participates in mRNA export and accurate chromatin positioning in the nucleus by tethering genes to the nuclear periphery. May also be involved in cytoplasmic mRNA decay by interaction with components of P-bodies. In Eremothecium gossypii (strain ATCC 10895 / CBS 109.51 / FGSC 9923 / NRRL Y-1056) (Yeast), this protein is Transcription and mRNA export factor SUS1.